Consider the following 859-residue polypeptide: MQEQYNPSEIEALVQKHWHDNKTFEVTEDANKEKFYCLSMFPYPSGRLHMGHVRNYTIGDVVARFQRLQGKNVLQPIGWDSFGLPAENAAINNKTAPAPWTYENIEYMKNQLKLLGFGYDWSREIATCTPEYYRWEQWFFTKLYEKGLVYKKTASVNWCPNDETVLANEQVQDGCCWRCDTPVEQKEIPQWFIKITAYAEELLNDIDTLDGWPDQVKTMQRNWIGRSEGVEMTFGVAGHDKSFDIYTTRPDTLMGVTYVAIAAGHPLAEIAAHTNPELAAFIDECKNSTTSEAELATMEKRGVATGLFAIHPITGKQVPIWAANFVLMNYGTGAVMSVPGHDQRDFEFAKKYGLAIEAVIKPVDGDVDISEAAYTEKGVLFNSGEFDGLDFEAGFNAIANKLVAEGKGKRQVNYRLRDWGVSRQRYWGAPIPMVTLADGTVIPTPADQLPVLLPEDVVMDGIQSPIKADKEWAKTQVNGQDALRETDTFDTFMESSWYYARYCSPHADEMLDPAKANYWLPVDQYIGGIEHACMHLLYFRFFHKLLRDAGLVNSNEPAKQLLTQGMVLADAFYYINEKGARVWVSPLDVATTEKDDKGRITKAIDKDGNELVYTGMSKMSKSKNNGIDPQVMVEKYGADTVRLFMMFASPPELTLEWQESGVEGAHRFIKRLWKLANEHVNQDNSEALDVSTLTSDQKALRREVHKTIAKVTDDIGRRQMFNTAVAAVMELMNHLQKAPQTTGQDNAIIGEALSAIVRLLYPIIPHVSFNLWNELGNASNIEDSQWPVVDEAALVEDSKLIVVQVNGKVRAKITVAADADKESVEALGMIDEHVIKYLDGLTVRKVIYVPGKLLSIVAN.

The 'HIGH' region signature appears at 42 to 52; sequence PYPSGRLHMGH. Positions 618-622 match the 'KMSKS' region motif; sequence KMSKS. Lysine 621 contributes to the ATP binding site.

It belongs to the class-I aminoacyl-tRNA synthetase family.

It localises to the cytoplasm. It carries out the reaction tRNA(Leu) + L-leucine + ATP = L-leucyl-tRNA(Leu) + AMP + diphosphate. This is Leucine--tRNA ligase from Shewanella baltica (strain OS223).